Consider the following 321-residue polypeptide: Phosphate acyltransferase (321 aa).

Belongs to the PlsX family. Homodimer. Probably interacts with PlsY.

Its subcellular location is the cytoplasm. The catalysed reaction is a fatty acyl-[ACP] + phosphate = an acyl phosphate + holo-[ACP]. Its pathway is lipid metabolism; phospholipid metabolism. Catalyzes the reversible formation of acyl-phosphate (acyl-PO(4)) from acyl-[acyl-carrier-protein] (acyl-ACP). This enzyme utilizes acyl-ACP as fatty acyl donor, but not acyl-CoA. The polypeptide is Phosphate acyltransferase (Chlamydia trachomatis serovar L2 (strain ATCC VR-902B / DSM 19102 / 434/Bu)).